We begin with the raw amino-acid sequence, 957 residues long: AP2-associated protein kinase 1 (957 aa).

Met1 bears the N-acetylmethionine mark. The span at 1 to 11 (MKKFFDSRREQ) shows a compositional bias: basic and acidic residues. The disordered stretch occupies residues 1–25 (MKKFFDSRREQGGSGLGSGSSGGGG). Residues 12-25 (GGSGLGSGSSGGGG) are compositionally biased toward gly residues. At Ser14 the chain carries Phosphoserine. In terms of domain architecture, Protein kinase spans 46–315 (VTVDEVLAEG…QVSYFSFKLL (270 aa)). Residues 52–60 (LAEGGFAIV) and Lys74 each bind ATP. Residue Asp176 is the Proton acceptor of the active site. Tyr234 bears the Phosphotyrosine mark. The residue at position 235 (Ser235) is a Phosphoserine. 2 disordered regions span residues 326-506 (NSPI…AVHP) and 563-629 (TAAA…AGHR). Residues Thr354 and Thr389 each carry the phosphothreonine modification. Arg391 carries the post-translational modification Omega-N-methylarginine. Residues 436 to 448 (PQAPPTSQQPPSA) show a composition bias toward pro residues. Thr441 is modified (phosphothreonine). Low complexity-rich tracts occupy residues 449 to 506 (PAQA…AVHP) and 563 to 601 (TAAAAPQPQAQPAAAASPAPAQEPAQIQAPVRQQPKVQT). Thr602 is modified (phosphothreonine). The span at 607 to 617 (IQGQKLGSLTP) shows a compositional bias: polar residues. Ser614 bears the Phosphoserine mark. Thr616 carries the post-translational modification Phosphothreonine. Phosphoserine is present on residues Ser619, Ser620, Ser633, and Ser646. Residue Thr649 is modified to Phosphothreonine. The disordered stretch occupies residues 660–697 (SLNKSKSATTTPSGSPRASQQNVYNPSEGSTWNPFDDD). Over residues 668 to 692 (TTTPSGSPRASQQNVYNPSEGSTWN) the composition is skewed to polar residues. Tyr683 is modified (phosphotyrosine). Ser727, Ser842, Ser933, and Ser934 each carry phosphoserine. Positions 819–956 (EKADVAVESL…SLLLVDQLID (138 aa)) are clathrin-binding domain (CBD). 2 disordered regions span residues 832–855 (LEPPVPQRLPSQTESVTSNRTDSL) and 919–941 (VLITKNPQGGHSRNSSGSSESSL). The span at 840–855 (LPSQTESVTSNRTDSL) shows a compositional bias: polar residues. Over residues 927-940 (GGHSRNSSGSSESS) the composition is skewed to low complexity.

It belongs to the protein kinase superfamily. Ser/Thr protein kinase family. In terms of assembly, interacts (via CBD domain) with clathrin. Interacts with AP-2 complex. Interacts with NUMB. Interacts with alpha-adaptin. Interacts with EPS15 isoform 2. Interacts with membrane-bound activated NOTCH1 but not with the inactive full-length form of NOTCH1. Preferentially interacts with monoubiquitinated activated NOTCH1 compared to the non-ubiquitinated form. In terms of processing, autophosphorylated. In terms of tissue distribution, detected in brain (at protein level).

The protein localises to the cell membrane. It localises to the membrane. Its subcellular location is the clathrin-coated pit. It is found in the presynapse. The enzyme catalyses L-seryl-[protein] + ATP = O-phospho-L-seryl-[protein] + ADP + H(+). It catalyses the reaction L-threonyl-[protein] + ATP = O-phospho-L-threonyl-[protein] + ADP + H(+). With respect to regulation, stimulated by clathrin. Functionally, regulates clathrin-mediated endocytosis by phosphorylating the AP2M1/mu2 subunit of the adaptor protein complex 2 (AP-2) which ensures high affinity binding of AP-2 to cargo membrane proteins during the initial stages of endocytosis. Preferentially, may phosphorylate substrates on threonine residues. Regulates phosphorylation of other AP-2 subunits as well as AP-2 localization and AP-2-mediated internalization of ligand complexes. Phosphorylates NUMB and regulates its cellular localization, promoting NUMB localization to endosomes. Binds to and stabilizes the activated form of NOTCH1, increases its localization in endosomes and regulates its transcriptional activity. The polypeptide is AP2-associated protein kinase 1 (AAK1) (Bos taurus (Bovine)).